The chain runs to 690 residues: Lipase 2 (690 aa).

The N-terminal stretch at 1–37 (MLRGQEERKYSIRKYSIGVVSVLAATMFVVSSHEAQA) is a signal peptide. Positions 52–71 (LNQPGEQGNAITSHQMQSGK) are enriched in polar residues. Residues 52–266 (LNQPGEQGNA…KPTDKNTDNK (215 aa)) form a disordered region. Residues 72 to 81 (QLDDMHKENG) are compositionally biased toward basic and acidic residues. 3 stretches are compositionally biased toward polar residues: residues 82–114 (KSGT…NDNQ), 124–171 (SKQS…QPSI), and 185–206 (PTST…AQDA). Basic and acidic residues-rich tracts occupy residues 225 to 237 (IDAK…RQSE) and 257 to 266 (KPTDKNTDNK). Active-site charge relay system residues include Ser-412 and His-645.

Belongs to the AB hydrolase superfamily. Lipase family.

It localises to the secreted. It carries out the reaction a triacylglycerol + H2O = a diacylglycerol + a fatty acid + H(+). The polypeptide is Lipase 2 (lip2) (Staphylococcus aureus (strain NCTC 8325 / PS 47)).